Consider the following 264-residue polypeptide: Glutamate racemase 2 (264 aa).

Substrate contacts are provided by residues 10-11 (DS) and 42-43 (YG). Cys73 serves as the catalytic Proton donor/acceptor. 74–75 (NT) serves as a coordination point for substrate. Cys181 acts as the Proton donor/acceptor in catalysis. 182-183 (TH) is a substrate binding site.

The protein belongs to the aspartate/glutamate racemases family.

The catalysed reaction is L-glutamate = D-glutamate. The protein operates within cell wall biogenesis; peptidoglycan biosynthesis. Its function is as follows. Provides the (R)-glutamate required for cell wall biosynthesis. The polypeptide is Glutamate racemase 2 (Caldanaerobacter subterraneus subsp. tengcongensis (strain DSM 15242 / JCM 11007 / NBRC 100824 / MB4) (Thermoanaerobacter tengcongensis)).